A 299-amino-acid chain; its full sequence is ATP phosphoribosyltransferase (299 aa).

It belongs to the ATP phosphoribosyltransferase family. Long subfamily. Mg(2+) is required as a cofactor.

It localises to the cytoplasm. It carries out the reaction 1-(5-phospho-beta-D-ribosyl)-ATP + diphosphate = 5-phospho-alpha-D-ribose 1-diphosphate + ATP. It participates in amino-acid biosynthesis; L-histidine biosynthesis; L-histidine from 5-phospho-alpha-D-ribose 1-diphosphate: step 1/9. Feedback inhibited by histidine. Functionally, catalyzes the condensation of ATP and 5-phosphoribose 1-diphosphate to form N'-(5'-phosphoribosyl)-ATP (PR-ATP). Has a crucial role in the pathway because the rate of histidine biosynthesis seems to be controlled primarily by regulation of HisG enzymatic activity. The polypeptide is ATP phosphoribosyltransferase (Rhodopirellula baltica (strain DSM 10527 / NCIMB 13988 / SH1)).